We begin with the raw amino-acid sequence, 132 residues long: Small ribosomal subunit protein uS8 (132 aa).

It belongs to the universal ribosomal protein uS8 family. As to quaternary structure, part of the 30S ribosomal subunit. Contacts proteins S5 and S12.

One of the primary rRNA binding proteins, it binds directly to 16S rRNA central domain where it helps coordinate assembly of the platform of the 30S subunit. In Stenotrophomonas maltophilia (strain R551-3), this protein is Small ribosomal subunit protein uS8.